A 372-amino-acid polypeptide reads, in one-letter code: Adaptive-response sensory kinase SasA (372 aa).

The 214-residue stretch at 147 to 360 (MVAHELRTPL…CFHFTVPVWQ (214 aa)) folds into the Histidine kinase domain. At His-150 the chain carries Phosphohistidine; by autocatalysis.

Homooligomerizes. Interacts with KaiC. Participates in the KaiBC complex, whose core is composed of a KaiC homohexamer and 6 KaiB.

The enzyme catalyses ATP + protein L-histidine = ADP + protein N-phospho-L-histidine.. Its function is as follows. Member of the two-component regulatory system SasA/RpaA involved in genome-wide circadian gene expression. One of several clock output pathways. Participates in the Kai clock protein complex, the main circadian regulator in cyanobacteria, via its interaction with KaiC. KaiC enhances the autophosphorylation activity of SasA, which then transfers its phosphate group to RpaA to activate it. In addition to its output function, recruits fold-shifted KaiB (KaiB(fs)) to KaiC to cooperatively form the KaiB(6):KaiC(6) complex (independent of SasA kinase activity). Required for robustness of the circadian rhythm of gene expression and is involved in clock output, also required for adaptation to light/dark cycles. This chain is Adaptive-response sensory kinase SasA, found in Prochlorococcus marinus (strain MIT 9301).